The primary structure comprises 386 residues: IgA receptor (386 aa).

An N-terminal signal peptide occupies residues 1–41; sequence MARKDTNKQYSLRKLKTGTASVAVAVAVLGAGFANQTEVKA. The segment at 42-152 is igA-binding; the sequence is AEIKKPQADS…QKKHQQEQQQ (111 aa). Basic and acidic residues-rich tracts occupy residues 79 to 88, 97 to 128, 134 to 166, 174 to 201, 209 to 221, 233 to 243, and 251 to 267; these read YADDKEKDPQ, QDLRKREGQYQDKIEELEKERKEKQERQEQLE, EADKHYQEQQKKHQQEQQQLEAEKQKLAKDKQI, LSRDLEASRAAKKELEAEHQKLKEEKQI, LSRDLEASREAKK, EHQKLKEDKQI, and LSRDLEASREAKKKVEA. Disordered stretches follow at residues 79–221 and 233–268; these read YADD…EAKK and EHQKLKEDKQISDASRQGLSRDLEASREAKKKVEAD. 3 C repeats span residues 158 to 192, 193 to 227, and 235 to 269; these read QKLAKDKQISDASRQGLSRDLEASRAAKKELEAEH, QKLKEEKQISDASRQGLSRDLEASREAKKKVEADL, and QKLKEDKQISDASRQGLSRDLEASREAKKKVEADL. D repeat units follow at residues 302-307, 308-313, 316-321, and 323-328; these read ARLEAE, AKALKE, AKQAEE, and AKLKGN. Residues 323–360 are disordered; sequence AKLKGNQTPNAKVAPQANRSRSAMTQQKRTLPSTGETA. Positions 339–359 are enriched in polar residues; that stretch reads ANRSRSAMTQQKRTLPSTGET. Positions 353–357 match the LPXTG sorting signal motif; it reads LPSTG. At threonine 356 the chain carries Pentaglycyl murein peptidoglycan amidated threonine. The propeptide at 357 to 386 is removed by sortase; that stretch reads GETANPFFTAAAATVMVSAGMLALKRKEEN.

Belongs to the M protein family.

It is found in the secreted. The protein resides in the cell wall. Binds IgA of both subclasses, and also binds polyclonal IgG weakly. The sequence is that of IgA receptor (arp4) from Streptococcus pyogenes.